Reading from the N-terminus, the 80-residue chain is Bowman-Birk type proteinase inhibitor DE-4 (80 aa).

Residues 1 to 10 (DDDHSDDEPR) show a composition bias toward acidic residues. Positions 1–29 (DDDHSDDEPRESESSKPCCSSCCTRSRPP) are disordered. Positions 15 to 29 (SKPCCSSCCTRSRPP) are enriched in low complexity. Cystine bridges form between Cys18–Cys71, Cys19–Cys33, Cys22–Cys67, Cys23–Cys31, Cys41–Cys48, Cys45–Cys60, and Cys50–Cys58.

This sequence belongs to the Bowman-Birk serine protease inhibitor family.

In Philenoptera violacea (Apple-leaf), this protein is Bowman-Birk type proteinase inhibitor DE-4.